The sequence spans 868 residues: Translation initiation factor IF-2 (868 aa).

2 disordered regions span residues 158-178 and 200-269; these read VKEE…DELT and KKEE…KYRE. Positions 200 to 209 are enriched in basic and acidic residues; it reads KKEEVKPEKV. Over residues 249–260 the composition is skewed to basic residues; the sequence is RGGRSKFKKKKG. Positions 368 to 537 constitute a tr-type G domain; that stretch reads GRAPVVTIMG…LLQSEVLELK (170 aa). The segment at 377–384 is G1; sequence GHVDHGKT. Residue 377 to 384 coordinates GTP; the sequence is GHVDHGKT. Residues 402 to 406 are G2; that stretch reads GITQH. The interval 423 to 426 is G3; that stretch reads DTPG. GTP contacts are provided by residues 423–427 and 477–480; these read DTPGH and NKMD. Residues 477–480 are G4; it reads NKMD. Residues 513–515 are G5; sequence SAK.

It belongs to the TRAFAC class translation factor GTPase superfamily. Classic translation factor GTPase family. IF-2 subfamily.

Its subcellular location is the cytoplasm. Functionally, one of the essential components for the initiation of protein synthesis. Protects formylmethionyl-tRNA from spontaneous hydrolysis and promotes its binding to the 30S ribosomal subunits. Also involved in the hydrolysis of GTP during the formation of the 70S ribosomal complex. The polypeptide is Translation initiation factor IF-2 (Legionella pneumophila (strain Lens)).